Consider the following 163-residue polypeptide: Transcriptional repressor NrdR (163 aa).

A zinc finger spans residues 3–34; it reads CPSCNSESSRVVDSRSIEMGVSIRRRRECSEC. The region spanning 46-136 is the ATP-cone domain; that stretch reads LLVVKRNGVT…VYKSFNCAED (91 aa).

This sequence belongs to the NrdR family. Zn(2+) serves as cofactor.

Functionally, negatively regulates transcription of bacterial ribonucleotide reductase nrd genes and operons by binding to NrdR-boxes. The polypeptide is Transcriptional repressor NrdR (Corynebacterium jeikeium (strain K411)).